The sequence spans 118 residues: Holo-[acyl-carrier-protein] synthase (118 aa).

Residues Asp9 and Glu52 each coordinate Mg(2+).

It belongs to the P-Pant transferase superfamily. AcpS family. Requires Mg(2+) as cofactor.

The protein resides in the cytoplasm. The enzyme catalyses apo-[ACP] + CoA = holo-[ACP] + adenosine 3',5'-bisphosphate + H(+). In terms of biological role, transfers the 4'-phosphopantetheine moiety from coenzyme A to a Ser of acyl-carrier-protein. The sequence is that of Holo-[acyl-carrier-protein] synthase from Frankia casuarinae (strain DSM 45818 / CECT 9043 / HFP020203 / CcI3).